The sequence spans 264 residues: Glutamate racemase (264 aa).

Residues 10 to 11 (DS) and 42 to 43 (YG) contribute to the substrate site. C73 serves as the catalytic Proton donor/acceptor. 74 to 75 (NT) provides a ligand contact to substrate. The Proton donor/acceptor role is filled by C183. 184 to 185 (TH) is a substrate binding site.

The protein belongs to the aspartate/glutamate racemases family.

The catalysed reaction is L-glutamate = D-glutamate. Its pathway is cell wall biogenesis; peptidoglycan biosynthesis. In terms of biological role, provides the (R)-glutamate required for cell wall biosynthesis. The sequence is that of Glutamate racemase from Streptococcus pyogenes serotype M6 (strain ATCC BAA-946 / MGAS10394).